Consider the following 119-residue polypeptide: Glucitol operon activator protein (119 aa).

Positions 23–29 (QISRFNR) form a DNA-binding region, H-T-H motif.

Positive regulator for glucitol operon expression. This Escherichia coli (strain K12) protein is Glucitol operon activator protein (gutM).